We begin with the raw amino-acid sequence, 182 residues long: Ribosome maturation factor RimM (182 aa).

A PRC barrel domain is found at D103–F182.

The protein belongs to the RimM family. As to quaternary structure, binds ribosomal protein uS19.

The protein resides in the cytoplasm. Functionally, an accessory protein needed during the final step in the assembly of 30S ribosomal subunit, possibly for assembly of the head region. Essential for efficient processing of 16S rRNA. May be needed both before and after RbfA during the maturation of 16S rRNA. It has affinity for free ribosomal 30S subunits but not for 70S ribosomes. The sequence is that of Ribosome maturation factor RimM from Citrobacter koseri (strain ATCC BAA-895 / CDC 4225-83 / SGSC4696).